We begin with the raw amino-acid sequence, 299 residues long: Taste receptor type 2 member 42 (299 aa).

The Extracellular portion of the chain corresponds to 1–7 (MATELDK). A helical membrane pass occupies residues 8–28 (IFLILAIAEFIISMLGNVFIG). Residues 29 to 50 (LVNCSEGIKNQKVFSSDFILTS) lie on the Cytoplasmic side of the membrane. Residues 51–71 (LAISTIGQLLVILFDSFLVGL) form a helical membrane-spanning segment. The Extracellular portion of the chain corresponds to 72 to 101 (ASHLYTTYRLGKPVIMLWHMTNHLTTWLAT). The helical transmembrane segment at 102–122 (CLSVFYFFKIAHFPHSLFLWL) threads the bilayer. Residues 123 to 127 (RWRMN) lie on the Cytoplasmic side of the membrane. A helical transmembrane segment spans residues 128–148 (GMIAMLLILSLFLLIFDSSVL). The Extracellular segment spans residues 149 to 187 (EIFIDISLNIIDKSSLTLYLDESKTLYDKLSILKTLLSL). A helical transmembrane segment spans residues 188-208 (TSFIPFSLSLTSVLFLYLSLV). Residues 209–238 (RHTRNLKLSSLGSRDSSTEAHRRAMKMVMS) lie on the Cytoplasmic side of the membrane. The chain crosses the membrane as a helical span at residues 239–259 (FLFLFIVHFFSLQVANWIFFM). Over 260–265 (LWNNKY) the chain is Extracellular. The helical transmembrane segment at 266-286 (IKFVMLALNAFPSCHSFILIL) threads the bilayer. Residues 287-299 (GNSKLRQTAVRLL) are Cytoplasmic-facing.

This sequence belongs to the G-protein coupled receptor T2R family.

Its subcellular location is the membrane. Receptor that may play a role in the perception of bitterness and is gustducin-linked. May play a role in sensing the chemical composition of the gastrointestinal content. The activity of this receptor may stimulate alpha gustducin, mediate PLC-beta-2 activation and lead to the gating of TRPM5. This Gorilla gorilla gorilla (Western lowland gorilla) protein is Taste receptor type 2 member 42 (TAS2R42).